Consider the following 316-residue polypeptide: Ribosomal RNA large subunit methyltransferase F (316 aa).

This sequence belongs to the methyltransferase superfamily. METTL16/RlmF family.

It is found in the cytoplasm. It carries out the reaction adenosine(1618) in 23S rRNA + S-adenosyl-L-methionine = N(6)-methyladenosine(1618) in 23S rRNA + S-adenosyl-L-homocysteine + H(+). Specifically methylates the adenine in position 1618 of 23S rRNA. The protein is Ribosomal RNA large subunit methyltransferase F of Pseudomonas putida (strain W619).